A 481-amino-acid chain; its full sequence is Neuronal acetylcholine receptor subunit eat-2 (481 aa).

An N-terminal signal peptide occupies residues 1–19 (MFLLLQILYILLFLNLADT). The Extracellular portion of the chain corresponds to 20-235 (SDDEYRLLKD…MHLKRRTMYY (216 aa)). N-linked (GlcNAc...) asparagine glycosylation occurs at asparagine 93. An intrachain disulfide couples cysteine 147 to cysteine 161. 3 consecutive transmembrane segments (helical) span residues 236–256 (GLNW…GFTM), 264–284 (VTLQ…VSEV), and 292–312 (IPII…SICV). At 313–443 (SLITVNIFYR…WRFMAMVIDR (131 aa)) the chain is on the cytoplasmic side. The tract at residues 356–384 (KPKREKKKEEEEDEESNAGGKEEESELIS) is disordered. A helical transmembrane segment spans residues 444 to 464 (ASLFLFTGLIFGTTFVIFAAC).

The protein belongs to the ligand-gated ion channel (TC 1.A.9) family. Acetylcholine receptor (TC 1.A.9.1) subfamily. As to quaternary structure, neuronal AChR seems to be composed of two different type of subunits: alpha and beta.

The protein resides in the postsynaptic cell membrane. Its subcellular location is the cell membrane. Functionally, after binding acetylcholine, the AChR responds by an extensive change in conformation that affects all subunits and leads to opening of an ion-conducting channel across the plasma membrane. Nicotinic acetylcholine receptor in the MC pharyngeal motor neuron involved in pharyngeal pumping. Has a role in the determination of life span possibly via calorific restriction which affects growth rate, although this is independent of metabolic activity. The polypeptide is Neuronal acetylcholine receptor subunit eat-2 (Caenorhabditis briggsae).